The primary structure comprises 239 residues: tRNA (guanine-N(1)-)-methyltransferase (239 aa).

S-adenosyl-L-methionine contacts are provided by residues Gly-112 and 131 to 136 (LGDFIL).

The protein belongs to the RNA methyltransferase TrmD family. Homodimer.

The protein resides in the cytoplasm. The enzyme catalyses guanosine(37) in tRNA + S-adenosyl-L-methionine = N(1)-methylguanosine(37) in tRNA + S-adenosyl-L-homocysteine + H(+). In terms of biological role, specifically methylates guanosine-37 in various tRNAs. The sequence is that of tRNA (guanine-N(1)-)-methyltransferase from Clostridium tetani (strain Massachusetts / E88).